The primary structure comprises 859 residues: Bifunctional heparan sulfate N-deacetylase/N-sulfotransferase 1 (859 aa).

Residues 1–13 (MIITPYLNPRLVK) are Cytoplasmic-facing. A helical; Signal-anchor for type II membrane protein transmembrane segment spans residues 14–34 (PLKWLAIIILLYFLYFSLFSI). Residues 34 to 575 (INKKPGKPRK…PRHQAILPPS (542 aa)) are heparan sulfate N-deacetylase 1. The Lumenal portion of the chain corresponds to 35–859 (NKKPGKPRKP…WLEEAVRIRV (825 aa)). N-linked (GlcNAc...) asparagine glycans are attached at residues Asn-50, Asn-74, Asn-210, Asn-262, Asn-378, and Asn-429. A heparan sulfate N-sulfotransferase 1 region spans residues 576–859 (MSCSKKSLPD…WLEEAVRIRV (284 aa)). Lys-593 (for sulfotransferase activity) is an active-site residue. 593-597 (KTGST) contributes to the 3'-phosphoadenylyl sulfate binding site. 2 N-linked (GlcNAc...) asparagine glycosylation sites follow: Asn-608 and Asn-643. Ser-687 is a binding site for 3'-phosphoadenylyl sulfate. Asn-715 carries an N-linked (GlcNAc...) asparagine glycan. Residues Cys-796 and Cys-805 are joined by a disulfide bond. Residue 810-814 (KGRKY) participates in 3'-phosphoadenylyl sulfate binding.

Belongs to the sulfotransferase 1 family. NDST subfamily. As to quaternary structure, monomer.

The protein resides in the golgi apparatus membrane. It catalyses the reaction alpha-D-glucosaminyl-[heparan sulfate](n) + 3'-phosphoadenylyl sulfate = N-sulfo-alpha-D-glucosaminyl-[heparan sulfate](n) + adenosine 3',5'-bisphosphate + 2 H(+). It participates in glycan metabolism; heparan sulfate biosynthesis. Its pathway is glycan metabolism; heparin biosynthesis. Functionally, essential bifunctional enzyme that catalyzes both the N-deacetylation and the N-sulfation of glucosamine (GlcNAc) of the glycosaminoglycan in heparan sulfate. Modifies the GlcNAc-GlcA disaccharide repeating sugar backbone to make N-sulfated heparosan, a prerequisite substrate for later modifications in heparin biosynthesis. In Caenorhabditis briggsae, this protein is Bifunctional heparan sulfate N-deacetylase/N-sulfotransferase 1 (hst-1).